A 364-amino-acid chain; its full sequence is Peptide chain release factor 2 (364 aa).

Position 251 is an N5-methylglutamine (Q251).

This sequence belongs to the prokaryotic/mitochondrial release factor family. In terms of processing, methylated by PrmC. Methylation increases the termination efficiency of RF2.

Its subcellular location is the cytoplasm. In terms of biological role, peptide chain release factor 2 directs the termination of translation in response to the peptide chain termination codons UGA and UAA. This is Peptide chain release factor 2 (prfB) from Buchnera aphidicola subsp. Schizaphis graminum (strain Sg).